The primary structure comprises 378 residues: Cytochrome b (378 aa).

4 helical membrane-spanning segments follow: residues 33–53 (FGSL…FLAM), 77–98 (WMIR…FLHT), 113–133 (WNIG…GYVL), and 178–198 (FFTF…IHLL). Heme b-binding residues include H83 and H97. Residues H182 and H196 each coordinate heme b. H201 provides a ligand contact to a ubiquinone. A run of 4 helical transmembrane segments spans residues 226–246 (TKDI…TLFT), 288–308 (LGGV…PATH), 320–340 (ITQI…WIGG), and 347–366 (FEAI…TLIP).

Belongs to the cytochrome b family. The cytochrome bc1 complex contains 11 subunits: 3 respiratory subunits (MT-CYB, CYC1 and UQCRFS1), 2 core proteins (UQCRC1 and UQCRC2) and 6 low-molecular weight proteins (UQCRH/QCR6, UQCRB/QCR7, UQCRQ/QCR8, UQCR10/QCR9, UQCR11/QCR10 and a cleavage product of UQCRFS1). This cytochrome bc1 complex then forms a dimer. Heme b is required as a cofactor.

Its subcellular location is the mitochondrion inner membrane. In terms of biological role, component of the ubiquinol-cytochrome c reductase complex (complex III or cytochrome b-c1 complex) that is part of the mitochondrial respiratory chain. The b-c1 complex mediates electron transfer from ubiquinol to cytochrome c. Contributes to the generation of a proton gradient across the mitochondrial membrane that is then used for ATP synthesis. The sequence is that of Cytochrome b (MT-CYB) from Cebus albifrons (White-fronted capuchin).